A 447-amino-acid polypeptide reads, in one-letter code: MLLCVSANHKKTSFTVLEQLARVSPDFASELVEAEDIDGAAILSTCNRFEVYIDAIQKGDQDDVCKTGLLVQNRIGELCNISPSTIIEQTSFLAGCEVSRHLFSVATGLESMIIGETEIAGQVKRALTYAQKCRTTSPELERLFQRASAVNRHIRQSTKINEVGQSLVSLSLDLASSRIGDWSGVRAIIVGTGKYASKALALLKERGVVDISVYSPSGHVNNICNTEGVRNIFNLQTALSGCDLVVGCSSVDKPVITKQDIETAQASGSRTSRVRPVGRPSTDLTAIEASNRSRHVLIDLGLPRNFDPAISDLPTADLIDLDMLRVHAPFDNLAAEKMAHELAIESSSQFVNDCKQHEATPVIVSFRNYLESLTQTSLRRTDNCKHAQHALKHFVNSLIHIPLTRCKQLAANGESHKFAESMEILFDVKTDCTEGTQYQSSCGKSFD.

Residues 45-48, S111, 116-118, and Q122 each bind substrate; these read TCNR and ETE. C46 serves as the catalytic Nucleophile. 191–196 lines the NADP(+) pocket; it reads GTGKYA.

The protein belongs to the glutamyl-tRNA reductase family. In terms of assembly, homodimer.

The catalysed reaction is (S)-4-amino-5-oxopentanoate + tRNA(Glu) + NADP(+) = L-glutamyl-tRNA(Glu) + NADPH + H(+). Its pathway is porphyrin-containing compound metabolism; protoporphyrin-IX biosynthesis; 5-aminolevulinate from L-glutamyl-tRNA(Glu): step 1/2. In terms of biological role, catalyzes the NADPH-dependent reduction of glutamyl-tRNA(Glu) to glutamate 1-semialdehyde (GSA). This chain is Glutamyl-tRNA reductase, found in Tropheryma whipplei (strain Twist) (Whipple's bacillus).